The following is a 525-amino-acid chain: Probable protein kinase UbiB (525 aa).

Residues 119–501 (RFDHHPVASA…QRRTNRLLSA (383 aa)) form the Protein kinase domain. ATP is bound by residues 125–133 (VASASIAQV) and lysine 151. Aspartate 286 serves as the catalytic Proton acceptor. A helical membrane pass occupies residues 502–522 (ALLFIGGFAVGIIATHVLAWL).

It belongs to the ABC1 family. UbiB subfamily.

Its subcellular location is the cell inner membrane. Its pathway is cofactor biosynthesis; ubiquinone biosynthesis [regulation]. Is probably a protein kinase regulator of UbiI activity which is involved in aerobic coenzyme Q (ubiquinone) biosynthesis. This chain is Probable protein kinase UbiB, found in Ralstonia nicotianae (strain ATCC BAA-1114 / GMI1000) (Ralstonia solanacearum).